Here is a 212-residue protein sequence, read N- to C-terminus: uncharacterized protein (212 aa).

Transmembrane regions (helical) follow at residues 54–74 (LCFALTLLLTLGGTISAGYAG) and 79–99 (WIICGIGLGIIVLTLILALLL).

It is found in the cell membrane. This is an uncharacterized protein from Chlamydia pneumoniae (Chlamydophila pneumoniae).